The primary structure comprises 598 residues: Probable pectinesterase/pectinesterase inhibitor 34 (598 aa).

The tract at residues 1–40 (MGYERLGPSGATGSVTTSTTTAPILNQVSTSEQPENNNRR) is disordered. Low complexity predominate over residues 7 to 23 (GPSGATGSVTTSTTTAP). A compositionally biased stretch (polar residues) spans 24-36 (ILNQVSTSEQPEN). Residues 46–66 (VVSSIVLAISLILAAAIFAGV) traverse the membrane as a helical segment. The tract at residues 81-232 (RKPSQAISKA…SELVSNCLAI (152 aa)) is pectinesterase inhibitor 34. Residues 284–582 (DIIVSKDGNG…FTVAEFIYGS (299 aa)) form a pectinesterase 34 region. Positions 360 and 390 each coordinate substrate. The active-site Proton donor; for pectinesterase activity is D413. Residues C427 and C447 are joined by a disulfide bond. Residue D434 is the Nucleophile; for pectinesterase activity of the active site. Substrate-binding residues include R502 and W504.

It in the N-terminal section; belongs to the PMEI family. The protein in the C-terminal section; belongs to the pectinesterase family. Expressed in siliques.

It localises to the membrane. It catalyses the reaction [(1-&gt;4)-alpha-D-galacturonosyl methyl ester](n) + n H2O = [(1-&gt;4)-alpha-D-galacturonosyl](n) + n methanol + n H(+). It participates in glycan metabolism; pectin degradation; 2-dehydro-3-deoxy-D-gluconate from pectin: step 1/5. Functionally, acts in the modification of cell walls via demethylesterification of cell wall pectin. The polypeptide is Probable pectinesterase/pectinesterase inhibitor 34 (PME34) (Arabidopsis thaliana (Mouse-ear cress)).